Reading from the N-terminus, the 151-residue chain is Ribosomal RNA large subunit methyltransferase H (151 aa).

S-adenosyl-L-methionine-binding positions include Ala101 and 119-124 (LSEMTF).

The protein belongs to the RNA methyltransferase RlmH family. Homodimer.

It localises to the cytoplasm. It carries out the reaction pseudouridine(1915) in 23S rRNA + S-adenosyl-L-methionine = N(3)-methylpseudouridine(1915) in 23S rRNA + S-adenosyl-L-homocysteine + H(+). Functionally, specifically methylates the pseudouridine at position 1915 (m3Psi1915) in 23S rRNA. The protein is Ribosomal RNA large subunit methyltransferase H of Helicobacter pylori (strain G27).